The chain runs to 356 residues: 4-hydroxy-3-methylbut-2-en-1-yl diphosphate synthase (flavodoxin) (356 aa).

[4Fe-4S] cluster is bound by residues C262, C265, C297, and E304.

This sequence belongs to the IspG family. It depends on [4Fe-4S] cluster as a cofactor.

The enzyme catalyses (2E)-4-hydroxy-3-methylbut-2-enyl diphosphate + oxidized [flavodoxin] + H2O + 2 H(+) = 2-C-methyl-D-erythritol 2,4-cyclic diphosphate + reduced [flavodoxin]. It functions in the pathway isoprenoid biosynthesis; isopentenyl diphosphate biosynthesis via DXP pathway; isopentenyl diphosphate from 1-deoxy-D-xylulose 5-phosphate: step 5/6. Converts 2C-methyl-D-erythritol 2,4-cyclodiphosphate (ME-2,4cPP) into 1-hydroxy-2-methyl-2-(E)-butenyl 4-diphosphate. The protein is 4-hydroxy-3-methylbut-2-en-1-yl diphosphate synthase (flavodoxin) of Campylobacter fetus subsp. fetus (strain 82-40).